Reading from the N-terminus, the 82-residue chain is U24 protein (82 aa).

The short motif at 7–10 (PPSY) is the PPXY motif element. A helical membrane pass occupies residues 52–72 (FIILACLIISVILCLILILHI).

Interacts with host ITCH; this interaction probably mediates ITCH degradation. Interacts probably with NEDD4.

The protein resides in the membrane. Its function is as follows. Down-regulates of the TCR/CD3E complex and the transferrin receptor TFRC in host T-cells by blocking them from recycling back to the cell surface. The protein is U24 protein of Homo sapiens (Human).